Reading from the N-terminus, the 552-residue chain is Lysine--tRNA ligase (552 aa).

Positions 72 to 80 match the 'HIGH' region motif; it reads PSGLPHLGT. Positions 320 to 324 match the 'KMSKS' region motif; the sequence is KISKS. Lys-323 provides a ligand contact to ATP.

The protein belongs to the class-I aminoacyl-tRNA synthetase family.

Its subcellular location is the cytoplasm. It catalyses the reaction tRNA(Lys) + L-lysine + ATP = L-lysyl-tRNA(Lys) + AMP + diphosphate. The sequence is that of Lysine--tRNA ligase from Caulobacter vibrioides (strain ATCC 19089 / CIP 103742 / CB 15) (Caulobacter crescentus).